The primary structure comprises 447 residues: Argininosuccinate synthase (447 aa).

ATP-binding positions include 17–25 (AFSGGLDTS) and Ala-43. Tyr-99 lines the L-citrulline pocket. 2 residues coordinate ATP: Gly-129 and Thr-131. Positions 131, 135, and 136 each coordinate L-aspartate. Asn-135 is an L-citrulline binding site. Asp-136 lines the ATP pocket. The L-citrulline site is built by Arg-139 and Ser-192. Asp-194 contacts ATP. L-citrulline is bound by residues Thr-201, Glu-203, and Glu-280.

It belongs to the argininosuccinate synthase family. Type 2 subfamily. As to quaternary structure, homotetramer.

Its subcellular location is the cytoplasm. The catalysed reaction is L-citrulline + L-aspartate + ATP = 2-(N(omega)-L-arginino)succinate + AMP + diphosphate + H(+). Its pathway is amino-acid biosynthesis; L-arginine biosynthesis; L-arginine from L-ornithine and carbamoyl phosphate: step 2/3. This Salmonella typhi protein is Argininosuccinate synthase (argG).